Consider the following 268-residue polypeptide: Tryptophan synthase alpha chain (268 aa).

Catalysis depends on proton acceptor residues glutamate 49 and aspartate 60.

This sequence belongs to the TrpA family. As to quaternary structure, tetramer of two alpha and two beta chains.

It carries out the reaction (1S,2R)-1-C-(indol-3-yl)glycerol 3-phosphate + L-serine = D-glyceraldehyde 3-phosphate + L-tryptophan + H2O. The protein operates within amino-acid biosynthesis; L-tryptophan biosynthesis; L-tryptophan from chorismate: step 5/5. In terms of biological role, the alpha subunit is responsible for the aldol cleavage of indoleglycerol phosphate to indole and glyceraldehyde 3-phosphate. In Edwardsiella ictaluri (strain 93-146), this protein is Tryptophan synthase alpha chain.